The sequence spans 203 residues: Glycerol-3-phosphate acyltransferase (203 aa).

5 helical membrane-spanning segments follow: residues 10 to 30, 59 to 79, 87 to 107, 116 to 136, and 160 to 180; these read MLIL…GLIL, GAAA…VLLA, AAQV…WLGF, FLGL…LSWL, and LVLL…LMVF.

Belongs to the PlsY family. Probably interacts with PlsX.

It is found in the cell inner membrane. The enzyme catalyses an acyl phosphate + sn-glycerol 3-phosphate = a 1-acyl-sn-glycero-3-phosphate + phosphate. Its pathway is lipid metabolism; phospholipid metabolism. Catalyzes the transfer of an acyl group from acyl-phosphate (acyl-PO(4)) to glycerol-3-phosphate (G3P) to form lysophosphatidic acid (LPA). This enzyme utilizes acyl-phosphate as fatty acyl donor, but not acyl-CoA or acyl-ACP. This is Glycerol-3-phosphate acyltransferase from Ruegeria pomeroyi (strain ATCC 700808 / DSM 15171 / DSS-3) (Silicibacter pomeroyi).